The chain runs to 97 residues: Putative regulatory protein Dole_1911 (97 aa).

This sequence belongs to the RemA family.

In Desulfosudis oleivorans (strain DSM 6200 / JCM 39069 / Hxd3) (Desulfococcus oleovorans), this protein is Putative regulatory protein Dole_1911.